A 306-amino-acid chain; its full sequence is N-acetylmuramic acid 6-phosphate etherase (306 aa).

The 164-residue stretch at 59-222 folds into the SIS domain; it reads ISEALRQGGR…STGAMVQLGK (164 aa). Glutamate 87 serves as the catalytic Proton donor. Glutamate 118 is a catalytic residue.

The protein belongs to the GCKR-like family. MurNAc-6-P etherase subfamily. As to quaternary structure, homodimer.

It carries out the reaction N-acetyl-D-muramate 6-phosphate + H2O = N-acetyl-D-glucosamine 6-phosphate + (R)-lactate. It participates in amino-sugar metabolism; N-acetylmuramate degradation. Specifically catalyzes the cleavage of the D-lactyl ether substituent of MurNAc 6-phosphate, producing GlcNAc 6-phosphate and D-lactate. The chain is N-acetylmuramic acid 6-phosphate etherase from Gloeothece citriformis (strain PCC 7424) (Cyanothece sp. (strain PCC 7424)).